A 140-amino-acid polypeptide reads, in one-letter code: Protein archease (140 aa).

Aspartate 11, aspartate 139, and leucine 140 together coordinate Ca(2+).

It belongs to the archease family.

Functionally, activates the tRNA-splicing ligase complex by facilitating the enzymatic turnover of catalytic subunit RtcB. Acts by promoting the guanylylation of RtcB, a key intermediate step in tRNA ligation. Can also alter the NTP specificity of RtcB such that ATP, dGTP or ITP is used efficiently. This Methanopyrus kandleri (strain AV19 / DSM 6324 / JCM 9639 / NBRC 100938) protein is Protein archease.